Consider the following 582-residue polypeptide: 2-succinyl-5-enolpyruvyl-6-hydroxy-3-cyclohexene-1-carboxylate synthase (582 aa).

It belongs to the TPP enzyme family. MenD subfamily. As to quaternary structure, homodimer. Mg(2+) serves as cofactor. Mn(2+) is required as a cofactor. It depends on thiamine diphosphate as a cofactor.

The catalysed reaction is isochorismate + 2-oxoglutarate + H(+) = 5-enolpyruvoyl-6-hydroxy-2-succinyl-cyclohex-3-ene-1-carboxylate + CO2. It functions in the pathway quinol/quinone metabolism; 1,4-dihydroxy-2-naphthoate biosynthesis; 1,4-dihydroxy-2-naphthoate from chorismate: step 2/7. The protein operates within quinol/quinone metabolism; menaquinone biosynthesis. In terms of biological role, catalyzes the thiamine diphosphate-dependent decarboxylation of 2-oxoglutarate and the subsequent addition of the resulting succinic semialdehyde-thiamine pyrophosphate anion to isochorismate to yield 2-succinyl-5-enolpyruvyl-6-hydroxy-3-cyclohexene-1-carboxylate (SEPHCHC). The sequence is that of 2-succinyl-5-enolpyruvyl-6-hydroxy-3-cyclohexene-1-carboxylate synthase from Chlorobaculum tepidum (strain ATCC 49652 / DSM 12025 / NBRC 103806 / TLS) (Chlorobium tepidum).